Reading from the N-terminus, the 447-residue chain is Probable glycosyltransferase 7 (447 aa).

The segment at 1-31 (MRATTGARHLHPPWRRGLRHHRQSTMPPRAS) is disordered. At 1–37 (MRATTGARHLHPPWRRGLRHHRQSTMPPRASRGRLAD) the chain is on the cytoplasmic side. Positions 8–23 (RHLHPPWRRGLRHHRQ) are enriched in basic residues. Residues 38 to 60 (AALFTAGAVLGSVLLLTLASPFS) traverse the membrane as a helical; Signal-anchor for type II membrane protein segment. Over 61–447 (SSSSPSSGVG…LPFDHPTQTA (387 aa)) the chain is Lumenal. N-linked (GlcNAc...) asparagine glycans are attached at residues Asn-285 and Asn-329.

Belongs to the glycosyltransferase 34 family.

Its subcellular location is the golgi apparatus membrane. Probable glycosyltransferase that may be involved in the biosynthesis of xyloglucan. The chain is Probable glycosyltransferase 7 from Oryza sativa subsp. indica (Rice).